Reading from the N-terminus, the 141-residue chain is MLNRTVLVGRLTKDPELRSTPNGVNVGTFTLAVNRTFTNAQGEREADFINVVVFKKQAENVKNYLSKGSLAGVDGRLQTRNYENKDGQRVFVTEVVADSVQFLEPKNNNQQQNNNYQQQRQTQTGNNPFDNNADSIEDLPF.

Residues 1 to 104 (MLNRTVLVGR…VVADSVQFLE (104 aa)) form the SSB domain. The interval 104–141 (EPKNNNQQQNNNYQQQRQTQTGNNPFDNNADSIEDLPF) is disordered. A compositionally biased stretch (low complexity) spans 107-127 (NNNQQQNNNYQQQRQTQTGNN).

Homotetramer.

The chain is Single-stranded DNA-binding protein 2 (ssb-p) from Staphylococcus aureus (strain Mu50 / ATCC 700699).